A 218-amino-acid chain; its full sequence is GTP cyclohydrolase 1 (218 aa).

3 residues coordinate Zn(2+): cysteine 109, histidine 112, and cysteine 180.

Belongs to the GTP cyclohydrolase I family. Toroid-shaped homodecamer, composed of two pentamers of five dimers.

It catalyses the reaction GTP + H2O = 7,8-dihydroneopterin 3'-triphosphate + formate + H(+). It functions in the pathway cofactor biosynthesis; 7,8-dihydroneopterin triphosphate biosynthesis; 7,8-dihydroneopterin triphosphate from GTP: step 1/1. The sequence is that of GTP cyclohydrolase 1 (folE) from Pasteurella multocida (strain Pm70).